Reading from the N-terminus, the 521-residue chain is Probable protein kinase UbiB (521 aa).

The region spanning 119-497 (SFEREPVASA…QKLTNRLLQA (379 aa)) is the Protein kinase domain. ATP-binding positions include 125–133 (VASASIAQV) and lysine 151. The Proton acceptor role is filled by aspartate 286. A helical membrane pass occupies residues 496-516 (QAIVSAGIGFVIALILLQLVV).

The protein belongs to the ABC1 family. UbiB subfamily.

It localises to the cell inner membrane. It functions in the pathway cofactor biosynthesis; ubiquinone biosynthesis [regulation]. Its function is as follows. Is probably a protein kinase regulator of UbiI activity which is involved in aerobic coenzyme Q (ubiquinone) biosynthesis. In Delftia acidovorans (strain DSM 14801 / SPH-1), this protein is Probable protein kinase UbiB.